The sequence spans 94 residues: Pyrimidine/purine nucleoside phosphorylase (94 aa).

The protein belongs to the nucleoside phosphorylase PpnP family.

It catalyses the reaction a purine D-ribonucleoside + phosphate = a purine nucleobase + alpha-D-ribose 1-phosphate. The catalysed reaction is adenosine + phosphate = alpha-D-ribose 1-phosphate + adenine. It carries out the reaction cytidine + phosphate = cytosine + alpha-D-ribose 1-phosphate. The enzyme catalyses guanosine + phosphate = alpha-D-ribose 1-phosphate + guanine. It catalyses the reaction inosine + phosphate = alpha-D-ribose 1-phosphate + hypoxanthine. The catalysed reaction is thymidine + phosphate = 2-deoxy-alpha-D-ribose 1-phosphate + thymine. It carries out the reaction uridine + phosphate = alpha-D-ribose 1-phosphate + uracil. The enzyme catalyses xanthosine + phosphate = alpha-D-ribose 1-phosphate + xanthine. Its function is as follows. Catalyzes the phosphorolysis of diverse nucleosides, yielding D-ribose 1-phosphate and the respective free bases. Can use uridine, adenosine, guanosine, cytidine, thymidine, inosine and xanthosine as substrates. Also catalyzes the reverse reactions. In Pseudomonas putida (strain GB-1), this protein is Pyrimidine/purine nucleoside phosphorylase.